The sequence spans 509 residues: Maturase K (509 aa).

This sequence belongs to the intron maturase 2 family. MatK subfamily.

It localises to the plastid. The protein localises to the chloroplast. Usually encoded in the trnK tRNA gene intron. Probably assists in splicing its own and other chloroplast group II introns. This Nicotiana sylvestris (Wood tobacco) protein is Maturase K.